Reading from the N-terminus, the 229-residue chain is Small ribosomal subunit protein uS3 (229 aa).

The 69-residue stretch at 17–85 folds into the KH type-2 domain; it reads VKEWIKDEVR…NPQVSVDEVE (69 aa). Positions 202–229 are disordered; the sequence is LRGESGEDEGDKGDEQGGEAQEAEGAGA. Residues 219-229 show a composition bias toward low complexity; that stretch reads GEAQEAEGAGA.

It belongs to the universal ribosomal protein uS3 family. As to quaternary structure, part of the 30S ribosomal subunit.

In terms of biological role, binds the lower part of the 30S subunit head. The sequence is that of Small ribosomal subunit protein uS3 from Archaeoglobus fulgidus (strain ATCC 49558 / DSM 4304 / JCM 9628 / NBRC 100126 / VC-16).